A 113-amino-acid polypeptide reads, in one-letter code: Putative membrane protein insertion efficiency factor (113 aa).

This sequence belongs to the UPF0161 family.

The protein localises to the cell inner membrane. Its function is as follows. Could be involved in insertion of integral membrane proteins into the membrane. The protein is Putative membrane protein insertion efficiency factor of Campylobacter jejuni subsp. jejuni serotype O:23/36 (strain 81-176).